Reading from the N-terminus, the 238-residue chain is ATP synthase subunit a (238 aa).

5 helical membrane passes run 15-35, 76-96, 111-131, 167-187, and 208-230; these read IFNL…FVFI, YSLF…LGLM, PTAN…LTHI, LALR…LLLL, and AFSV…VYLG.

Belongs to the ATPase A chain family. As to quaternary structure, F-type ATPases have 2 components, CF(1) - the catalytic core - and CF(0) - the membrane proton channel. CF(1) has five subunits: alpha(3), beta(3), gamma(1), delta(1), epsilon(1). CF(0) has three main subunits: a(1), b(2) and c(9-12). The alpha and beta chains form an alternating ring which encloses part of the gamma chain. CF(1) is attached to CF(0) by a central stalk formed by the gamma and epsilon chains, while a peripheral stalk is formed by the delta and b chains.

Its subcellular location is the cell membrane. Its function is as follows. Key component of the proton channel; it plays a direct role in the translocation of protons across the membrane. This is ATP synthase subunit a from Streptococcus pneumoniae (strain ATCC BAA-255 / R6).